Reading from the N-terminus, the 313-residue chain is Olfactory receptor 8B3 (313 aa).

Residues 1 to 25 lie on the Extracellular side of the membrane; it reads MLARNNSLVTEFILAGLTDHPEFQQ. Residue Asn5 is glycosylated (N-linked (GlcNAc...) asparagine). Residues 26–46 form a helical membrane-spanning segment; the sequence is PLFFLFLVVYIVTMVGNLGLI. Topologically, residues 47–54 are cytoplasmic; the sequence is ILFGLNSH. The chain crosses the membrane as a helical span at residues 55–75; the sequence is LHTPMYYFLFNLSFIDLCYSS. The Extracellular segment spans residues 76–99; the sequence is VFTPKMLMNFVSKKNIISYVGCMT. An intrachain disulfide couples Cys97 to Cys189. A helical transmembrane segment spans residues 100-120; it reads QLFFFLFFVISECYMLTSMAY. Topologically, residues 121-139 are cytoplasmic; it reads DRYVAICNPLLYKVTMSHQ. The chain crosses the membrane as a helical span at residues 140-160; sequence VCSMLTFAAYIMGLAGATAHT. Topologically, residues 161–197 are extracellular; it reads GCMLRLTFCSANIINHYLCDILPLLQLSCTSTYVNEV. The chain crosses the membrane as a helical span at residues 198–217; the sequence is VVLIVVGINIMVPSCTILIS. Topologically, residues 218–237 are cytoplasmic; that stretch reads YVFIVTSILHIKSTQGRSKA. The chain crosses the membrane as a helical span at residues 238–258; the sequence is FSTCSSHVIALSLFFGSAAFM. Topologically, residues 259-270 are extracellular; that stretch reads YIKYSSGSMEQG. The helical transmembrane segment at 271-291 threads the bilayer; sequence KVSSVFYTNVVPMLNPLIYSL. Topologically, residues 292–313 are cytoplasmic; that stretch reads RNKDVKVALRKALIKIQRRNIF.

The protein belongs to the G-protein coupled receptor 1 family.

It localises to the cell membrane. Odorant receptor. This Homo sapiens (Human) protein is Olfactory receptor 8B3 (OR8B3).